Here is a 993-residue protein sequence, read N- to C-terminus: Vinculin (993 aa).

2 tandem repeats follow at residues 258–364 (DSDN…TKEI) and 373–480 (TNTQ…ELVD). The interval 258–480 (DSDNVTVMRK…LRNKLRELVD (223 aa)) is 2 X repeats. The disordered stretch occupies residues 730-797 (ITGAGGSRPP…PPPETDDEEE (68 aa)). Residues 758 to 768 (VHDRIYIREDI) show a composition bias toward basic and acidic residues. The span at 769–790 (PTPPRPPPPVEISPPPRPPPPP) shows a compositional bias: pro residues.

This sequence belongs to the vinculin/alpha-catenin family. As to quaternary structure, exhibits self-association properties.

The protein resides in the cytoplasm. It localises to the cytoskeleton. It is found in the cell junction. The protein localises to the adherens junction. Its subcellular location is the cell membrane. Its function is as follows. Involved in cell adhesion. May be involved in the attachment of the actin-based microfilaments to the plasma membrane. In Brugia malayi (Filarial nematode worm), this protein is Vinculin.